Reading from the N-terminus, the 592-residue chain is MANYTKTAILSVYDKTGLLDLARGLIEKNVRILASGGTARMIRDAGFPIEDVSAITHAPEMLGGRVKTLHPAVHGGILARDIDSDEKDLKEQHIEKVDYVVCNLYPFKETVAKVGVTIPEAVEEIDIGGVTLLRAAAKNHARVTILSDPKDYSEFLSELSSNGEISQDLRNRLALKAFEHTADYDAAISDFFRKQYSEGQAQITLRYGANPHQKPAQAYVSQQDSLPFKVLCGSPGYINLLDALNSWPLVKELSASLNLPAAASFKHVSPAGAAVGIPLSDVEKQVYFVADIENLSPLACAYARARGADRMSSFGDWIALSNIVDVPTAKIISREVSDGVIAPGYEPEALAILSKKKGGKYCILQIDPNYVPEAVERRQVYGVTLEQKRNDAIINQSTFKEIVSQNKNLTEQAIIDLTVATIAIKYTQSNSVCYARNGMVVGLGAGQQSRIHCTRLAGDKADNWWFRQHPRVLEIKWAKGVKRPEKSNAIDLFVTGQIPTEEPELSEYQSKFEEIPKPFTPEERKEWLSKLTNVSLSSDAFFPFPDNVYRAVKSGVKYIAAPSGSVMDKVVFSAADSFDLVYVENPIRLFHH.

The MGS-like domain occupies 1–147 (MANYTKTAIL…KNHARVTILS (147 aa)). IMP-binding positions include 35 to 38 (SGGT), 65 to 68 (RVKT), 102 to 103 (CN), and 126 to 127 (DI). Residue lysine 138 is the Proton donor/acceptor; for FAICAR cyclization activity of the active site. Residues 206-207 (RY), histidine 267, glycine 315, aspartate 338, asparagine 430, and arginine 450 each bind 5-amino-1-(5-phospho-beta-D-ribosyl)imidazole-4-carboxamide. Histidine 267 serves as the catalytic Proton acceptor; for AICAR formyltransferase activity. Isoleucine 451 is a (6R)-10-formyltetrahydrofolate binding site. 5-amino-1-(5-phospho-beta-D-ribosyl)imidazole-4-carboxamide is bound at residue phenylalanine 541. Residues aspartate 546 and 565–566 (SV) contribute to the (6R)-10-formyltetrahydrofolate site. Arginine 588 is a binding site for 5-amino-1-(5-phospho-beta-D-ribosyl)imidazole-4-carboxamide.

The protein belongs to the PurH family. Homodimer.

The protein resides in the cytoplasm. Its subcellular location is the cytosol. It catalyses the reaction (6R)-10-formyltetrahydrofolate + 5-amino-1-(5-phospho-beta-D-ribosyl)imidazole-4-carboxamide = 5-formamido-1-(5-phospho-D-ribosyl)imidazole-4-carboxamide + (6S)-5,6,7,8-tetrahydrofolate. It carries out the reaction IMP + H2O = 5-formamido-1-(5-phospho-D-ribosyl)imidazole-4-carboxamide. It participates in purine metabolism; IMP biosynthesis via de novo pathway; 5-formamido-1-(5-phospho-D-ribosyl)imidazole-4-carboxamide from 5-amino-1-(5-phospho-D-ribosyl)imidazole-4-carboxamide (10-formyl THF route): step 1/1. The protein operates within purine metabolism; IMP biosynthesis via de novo pathway; IMP from 5-formamido-1-(5-phospho-D-ribosyl)imidazole-4-carboxamide: step 1/1. Bifunctional enzyme that catalyzes the last two steps of purine biosynthesis. Acts as a transformylase that incorporates a formyl group to the AMP analog AICAR (5-amino-1-(5-phospho-beta-D-ribosyl)imidazole-4-carboxamide) to produce the intermediate formyl-AICAR (FAICAR). Also catalyzes the cyclization of FAICAR to IMP. The sequence is that of Bifunctional purine biosynthesis protein ADE17 from Saccharomyces cerevisiae (strain ATCC 204508 / S288c) (Baker's yeast).